The primary structure comprises 353 residues: MSITNSAIYTFPESSFSENGHIEPLPLKVNEQRKAVPHIRVAKIGNPPKHGSRYLDVFLLGFFEMERIKDKYGSVNDLDSDPGYKVCGSGSLPIGLAKYTGNDQELLQAATKLDIEVRRTVKAKEMIVYTVQNIKPELYPWSSRLRKGMLFDANKVALAPQCLPLDRSIKFRVIFVNCTAIGSITLFKIPKSMASLSLPSTISINLQVHIKTGVQTDSKGIVQILDEKGEKSLNFMVHLGLIKRKVGRMYSVEYCKQKIEKMRLIFSLGLVGGISLHVNATGSISKTLASQLVFKREICYPLMDLNPHLNLVIWASSVEITRVDAIFQPSLPGEFRYYPNIIAKGVGKIKQWN.

The protein belongs to the morbillivirus/respirovirus/rubulavirus M protein family.

The protein resides in the virion. In terms of biological role, the M protein has a crucial role in virus assembly and interacts with the RNP complex as well as with the viral membrane. This Homo sapiens (Human) protein is Matrix protein (M).